A 217-amino-acid polypeptide reads, in one-letter code: Probable transaldolase (217 aa).

The active-site Schiff-base intermediate with substrate is the K83.

It belongs to the transaldolase family. Type 3B subfamily.

The protein localises to the cytoplasm. It carries out the reaction D-sedoheptulose 7-phosphate + D-glyceraldehyde 3-phosphate = D-erythrose 4-phosphate + beta-D-fructose 6-phosphate. It participates in carbohydrate degradation; pentose phosphate pathway; D-glyceraldehyde 3-phosphate and beta-D-fructose 6-phosphate from D-ribose 5-phosphate and D-xylulose 5-phosphate (non-oxidative stage): step 2/3. Transaldolase is important for the balance of metabolites in the pentose-phosphate pathway. The sequence is that of Probable transaldolase from Brucella anthropi (strain ATCC 49188 / DSM 6882 / CCUG 24695 / JCM 21032 / LMG 3331 / NBRC 15819 / NCTC 12168 / Alc 37) (Ochrobactrum anthropi).